Reading from the N-terminus, the 312-residue chain is GDSL esterase/lipase At2g38180 (312 aa).

Positions 1 to 22 (MVGPVRPQIVLFGSSIVQYSFT) are cleaved as a signal peptide. N-linked (GlcNAc...) asparagine glycosylation is present at N79. The segment at 285–312 (EPPHPVSLCDHELTQNEQLEPPQPTARL) is disordered.

Belongs to the 'GDSL' lipolytic enzyme family.

The protein resides in the secreted. The polypeptide is GDSL esterase/lipase At2g38180 (Arabidopsis thaliana (Mouse-ear cress)).